Here is a 612-residue protein sequence, read N- to C-terminus: Glutamine--fructose-6-phosphate aminotransferase [isomerizing] (612 aa).

Cys-2 acts as the Nucleophile; for GATase activity in catalysis. The Glutamine amidotransferase type-2 domain maps to 2 to 217 (CGIVGGVAER…EGDIARLTRD (216 aa)). SIS domains are found at residues 283–428 (AEAD…VKEQ) and 461–602 (LSEL…VDQP). Lys-607 acts as the For Fru-6P isomerization activity in catalysis.

As to quaternary structure, homodimer.

The protein resides in the cytoplasm. The enzyme catalyses D-fructose 6-phosphate + L-glutamine = D-glucosamine 6-phosphate + L-glutamate. Its function is as follows. Catalyzes the first step in hexosamine metabolism, converting fructose-6P into glucosamine-6P using glutamine as a nitrogen source. This Acinetobacter baylyi (strain ATCC 33305 / BD413 / ADP1) protein is Glutamine--fructose-6-phosphate aminotransferase [isomerizing].